A 695-amino-acid polypeptide reads, in one-letter code: UvrABC system protein B (695 aa).

Residues 45–434 enclose the Helicase ATP-binding domain; the sequence is EGIEDGLSFQ…QVVEQVVRPT (390 aa). Residue 58 to 65 participates in ATP binding; sequence GVTGSGKT. Positions 111–134 match the Beta-hairpin motif; the sequence is YYDYYQPEAYVPQRDLFIEKDSSI. Positions 449 to 602 constitute a Helicase C-terminal domain; sequence QVDDLLSEIN…QMAFNEANGI (154 aa). The region spanning 646–681 is the UVR domain; that stretch reads SKEIKRLEKLMMDHAKNLEFEKAAQVRDQLAKLKAQ.

This sequence belongs to the UvrB family. In terms of assembly, forms a heterotetramer with UvrA during the search for lesions. Interacts with UvrC in an incision complex.

The protein resides in the cytoplasm. In terms of biological role, the UvrABC repair system catalyzes the recognition and processing of DNA lesions. A damage recognition complex composed of 2 UvrA and 2 UvrB subunits scans DNA for abnormalities. Upon binding of the UvrA(2)B(2) complex to a putative damaged site, the DNA wraps around one UvrB monomer. DNA wrap is dependent on ATP binding by UvrB and probably causes local melting of the DNA helix, facilitating insertion of UvrB beta-hairpin between the DNA strands. Then UvrB probes one DNA strand for the presence of a lesion. If a lesion is found the UvrA subunits dissociate and the UvrB-DNA preincision complex is formed. This complex is subsequently bound by UvrC and the second UvrB is released. If no lesion is found, the DNA wraps around the other UvrB subunit that will check the other stand for damage. The chain is UvrABC system protein B from Cupriavidus pinatubonensis (strain JMP 134 / LMG 1197) (Cupriavidus necator (strain JMP 134)).